The chain runs to 292 residues: Glutamate racemase (292 aa).

Substrate is bound by residues 28–29 and 60–61; these read DS and YG. C91 serves as the catalytic Proton donor/acceptor. 92 to 93 serves as a coordination point for substrate; the sequence is NT. The active-site Proton donor/acceptor is the C200. 201-202 provides a ligand contact to substrate; that stretch reads TH.

The protein belongs to the aspartate/glutamate racemases family.

The enzyme catalyses L-glutamate = D-glutamate. It functions in the pathway cell wall biogenesis; peptidoglycan biosynthesis. Its function is as follows. Provides the (R)-glutamate required for cell wall biosynthesis. In Trichormus variabilis (strain ATCC 29413 / PCC 7937) (Anabaena variabilis), this protein is Glutamate racemase.